Here is a 302-residue protein sequence, read N- to C-terminus: UDP-3-O-acyl-N-acetylglucosamine deacetylase (302 aa).

3 residues coordinate Zn(2+): histidine 78, histidine 235, and aspartate 239. Histidine 262 functions as the Proton donor in the catalytic mechanism.

It belongs to the LpxC family. Zn(2+) serves as cofactor.

The catalysed reaction is a UDP-3-O-[(3R)-3-hydroxyacyl]-N-acetyl-alpha-D-glucosamine + H2O = a UDP-3-O-[(3R)-3-hydroxyacyl]-alpha-D-glucosamine + acetate. The protein operates within glycolipid biosynthesis; lipid IV(A) biosynthesis; lipid IV(A) from (3R)-3-hydroxytetradecanoyl-[acyl-carrier-protein] and UDP-N-acetyl-alpha-D-glucosamine: step 2/6. Its function is as follows. Catalyzes the hydrolysis of UDP-3-O-myristoyl-N-acetylglucosamine to form UDP-3-O-myristoylglucosamine and acetate, the committed step in lipid A biosynthesis. In Bdellovibrio bacteriovorus (strain ATCC 15356 / DSM 50701 / NCIMB 9529 / HD100), this protein is UDP-3-O-acyl-N-acetylglucosamine deacetylase.